The chain runs to 375 residues: Histidine biosynthesis bifunctional protein HisB (375 aa).

The tract at residues 1–168 (MTPILFVDRD…GIAHELADAP (168 aa)) is histidinol-phosphatase. Residue Asp-8 is the Nucleophile of the active site. Residues Asp-8, Asp-10, and Asp-128 each coordinate Mg(2+). The active-site Proton donor is Asp-10. Residues 169–375 (RRAVVQRNTK…TALPTTKGAL (207 aa)) are imidazoleglycerol-phosphate dehydratase.

The protein in the N-terminal section; belongs to the histidinol-phosphatase family. In the C-terminal section; belongs to the imidazoleglycerol-phosphate dehydratase family. Mg(2+) is required as a cofactor.

The protein localises to the cytoplasm. It carries out the reaction D-erythro-1-(imidazol-4-yl)glycerol 3-phosphate = 3-(imidazol-4-yl)-2-oxopropyl phosphate + H2O. The catalysed reaction is L-histidinol phosphate + H2O = L-histidinol + phosphate. It functions in the pathway amino-acid biosynthesis; L-histidine biosynthesis; L-histidine from 5-phospho-alpha-D-ribose 1-diphosphate: step 6/9. Its pathway is amino-acid biosynthesis; L-histidine biosynthesis; L-histidine from 5-phospho-alpha-D-ribose 1-diphosphate: step 8/9. This is Histidine biosynthesis bifunctional protein HisB from Xanthomonas euvesicatoria pv. vesicatoria (strain 85-10) (Xanthomonas campestris pv. vesicatoria).